The chain runs to 244 residues: 7-cyano-7-deazaguanine synthase (244 aa).

14 to 24 (FSGGQDSATCV) contacts ATP. Zn(2+) is bound by residues cysteine 202, cysteine 217, cysteine 220, and cysteine 223.

Belongs to the QueC family. Zn(2+) is required as a cofactor.

The catalysed reaction is 7-carboxy-7-deazaguanine + NH4(+) + ATP = 7-cyano-7-deazaguanine + ADP + phosphate + H2O + H(+). It functions in the pathway purine metabolism; 7-cyano-7-deazaguanine biosynthesis. Catalyzes the ATP-dependent conversion of 7-carboxy-7-deazaguanine (CDG) to 7-cyano-7-deazaguanine (preQ(0)). In Burkholderia multivorans (strain ATCC 17616 / 249), this protein is 7-cyano-7-deazaguanine synthase.